A 451-amino-acid chain; its full sequence is MSYSVLEALRNSPDVVRKVLTARRMDASLVDKFLELDEKWRRLKKEVDELRHEYNKLSKEGAKAPPERRREIADKARELAARLERAEKELEETERAREEVLWSFPNLIHESVPICPEGVDSIPVRHWGVVKTTKDVVDKLDKGVDYLVVEKAPVGHADMAEVVLKMADTLKAGEVAGSRFYYLFDDLVWLDFALAMYALDYLAQKGFRPVIPPYMLKYDLIRRVLDFDTFKDAIYKIDGEDLYLIATAEHGIAAYLYKRELLEEELPQLYVGWSPCFRKEAGAGSRDIKGIFRVHIFHKVEQFVFSLPEDSWKWHEEITKNTEELIRGLGLPYRVVNICAHDLGAPAAKKYDIEVWYPSQGMYRELASCSNVTDWQSYRLGIRVTRKGMKREYVHTLNCTGLATTRTITAILENFQREDGAVEIPKVLRQYLEPIKAAPKDYILPKAAKSP.

247–249 (TAE) is an L-serine binding site. ATP is bound by residues 278-280 (RKE) and Val-294. Glu-301 provides a ligand contact to L-serine. 365–368 (ELAS) is an ATP binding site. Thr-400 serves as a coordination point for L-serine.

This sequence belongs to the class-II aminoacyl-tRNA synthetase family. Type-1 seryl-tRNA synthetase subfamily. Homodimer. The tRNA molecule binds across the dimer.

The protein localises to the cytoplasm. The enzyme catalyses tRNA(Ser) + L-serine + ATP = L-seryl-tRNA(Ser) + AMP + diphosphate + H(+). It catalyses the reaction tRNA(Sec) + L-serine + ATP = L-seryl-tRNA(Sec) + AMP + diphosphate + H(+). It functions in the pathway aminoacyl-tRNA biosynthesis; selenocysteinyl-tRNA(Sec) biosynthesis; L-seryl-tRNA(Sec) from L-serine and tRNA(Sec): step 1/1. Its function is as follows. Catalyzes the attachment of serine to tRNA(Ser). Is also able to aminoacylate tRNA(Sec) with serine, to form the misacylated tRNA L-seryl-tRNA(Sec), which will be further converted into selenocysteinyl-tRNA(Sec). The sequence is that of Serine--tRNA ligase from Pyrobaculum aerophilum (strain ATCC 51768 / DSM 7523 / JCM 9630 / CIP 104966 / NBRC 100827 / IM2).